The primary structure comprises 275 residues: NH(3)-dependent NAD(+) synthetase (275 aa).

47–54 is a binding site for ATP; the sequence is GISGGQDS. D53 is a binding site for Mg(2+). A deamido-NAD(+)-binding site is contributed by R141. Residue T161 participates in ATP binding. E166 serves as a coordination point for Mg(2+). The deamido-NAD(+) site is built by K174 and D181. ATP-binding residues include K190 and T212. 261–262 lines the deamido-NAD(+) pocket; sequence HK.

This sequence belongs to the NAD synthetase family. In terms of assembly, homodimer.

The enzyme catalyses deamido-NAD(+) + NH4(+) + ATP = AMP + diphosphate + NAD(+) + H(+). Its pathway is cofactor biosynthesis; NAD(+) biosynthesis; NAD(+) from deamido-NAD(+) (ammonia route): step 1/1. Functionally, catalyzes the ATP-dependent amidation of deamido-NAD to form NAD. Uses ammonia as a nitrogen source. This is NH(3)-dependent NAD(+) synthetase from Lactiplantibacillus plantarum (strain ATCC BAA-793 / NCIMB 8826 / WCFS1) (Lactobacillus plantarum).